The following is a 470-amino-acid chain: uncharacterized protein (470 aa).

Positions 1-337 (MKFGHDFKRA…SLTAQPLFFQ (337 aa)) constitute an SPX domain. The tract at residues 118 to 145 (ASNVPSTPSDSTQQPPTNTLPSVSASSQ) is disordered. The span at 122–136 (PSTPSDSTQQPPTNT) shows a compositional bias: low complexity. The segment at 374–413 (CAICSNVAYKPVRLGCSHVFCLHCLIILQKQKVDFCPLCR) adopts an RING-type zinc-finger fold.

It localises to the cytoplasm. This is an uncharacterized protein from Schizosaccharomyces pombe (strain 972 / ATCC 24843) (Fission yeast).